The chain runs to 1322 residues: WD repeat-containing protein 17 (1322 aa).

WD repeat units follow at residues 81 to 121 (EHKK…VIAK), 123 to 164 (DSTK…SGVI), 171 to 211 (SFLS…QKHV), 221 to 261 (DEED…CITT), and 266 to 307 (SAAA…PIDN). A disordered region spans residues 328 to 352 (KFSVQSPTKNHYTSSTSEAVPPPTL). Positions 330-345 (SVQSPTKNHYTSSTSE) are enriched in polar residues. 7 WD repeats span residues 391–431 (GHVE…AVYT), 434–474 (GNEG…IIQR), 478–518 (HGTN…LHKY), 519–559 (KHPA…DQPL), 564–604 (GHTA…CINI), 607–647 (GHTA…CVDT), and 650–690 (DHGA…TPVQ).

This chain is WD repeat-containing protein 17 (WDR17), found in Homo sapiens (Human).